The sequence spans 306 residues: Ornithine carbamoyltransferase (306 aa).

Carbamoyl phosphate is bound by residues 53–56 (STRT), Q80, R104, and 131–134 (HPCQ). L-ornithine contacts are provided by residues N162, D220, and 224–225 (SM). Carbamoyl phosphate is bound by residues 260–261 (CL) and R288.

The protein belongs to the aspartate/ornithine carbamoyltransferase superfamily. OTCase family.

The protein localises to the cytoplasm. The catalysed reaction is carbamoyl phosphate + L-ornithine = L-citrulline + phosphate + H(+). It participates in amino-acid biosynthesis; L-arginine biosynthesis; L-arginine from L-ornithine and carbamoyl phosphate: step 1/3. In terms of biological role, reversibly catalyzes the transfer of the carbamoyl group from carbamoyl phosphate (CP) to the N(epsilon) atom of ornithine (ORN) to produce L-citrulline. The polypeptide is Ornithine carbamoyltransferase (Dechloromonas aromatica (strain RCB)).